A 90-amino-acid chain; its full sequence is DNA-binding protein HU-beta (90 aa).

It belongs to the bacterial histone-like protein family. As to quaternary structure, heterodimer of an alpha and a beta chain.

Functionally, histone-like DNA-binding protein which is capable of wrapping DNA to stabilize it, and thus to prevent its denaturation under extreme environmental conditions. This chain is DNA-binding protein HU-beta (hupB), found in Pseudomonas aeruginosa (strain ATCC 15692 / DSM 22644 / CIP 104116 / JCM 14847 / LMG 12228 / 1C / PRS 101 / PAO1).